A 62-amino-acid chain; its full sequence is Protein YnfQ (62 aa).

This sequence belongs to the YmcF/YnqF peptide family.

The polypeptide is Protein YnfQ (Escherichia coli (strain K12)).